The chain runs to 282 residues: B3 domain-containing protein At5g25475 (282 aa).

The TF-B3 DNA-binding region spans 20–114 (WKSLSPGQTW…NLEVQIFKNN (95 aa)). The interval 127–178 (PETEPFHPTPKKPHKETTPASSFASGSGCSANGGTNGRGKQRSSDVKNPERY) is disordered. Low complexity predominate over residues 144–159 (TPASSFASGSGCSANG).

It is found in the nucleus. The protein is B3 domain-containing protein At5g25475 of Arabidopsis thaliana (Mouse-ear cress).